Here is a 170-residue protein sequence, read N- to C-terminus: Urease accessory protein UreE (170 aa).

It belongs to the UreE family.

The protein localises to the cytoplasm. Its function is as follows. Involved in urease metallocenter assembly. Binds nickel. Probably functions as a nickel donor during metallocenter assembly. The sequence is that of Urease accessory protein UreE from Helicobacter acinonychis (strain Sheeba).